Here is a 461-residue protein sequence, read N- to C-terminus: Elongation factor 1-alpha (461 aa).

Residues lysine 5 to threonine 242 enclose the tr-type G domain. The segment at glycine 14 to serine 21 is G1. Glycine 14–serine 21 is a binding site for GTP. The tract at residues glycine 70–aspartate 74 is G2. A G3 region spans residues aspartate 91–glycine 94. Residues aspartate 91–histidine 95 and asparagine 153–aspartate 156 each bind GTP. Residues asparagine 153–aspartate 156 are G4. Residues serine 194–tryptophan 196 are G5. 2 positions are modified to 5-glutamyl glycerylphosphorylethanolamine: glutamate 301 and glutamate 374.

This sequence belongs to the TRAFAC class translation factor GTPase superfamily. Classic translation factor GTPase family. EF-Tu/EF-1A subfamily.

It localises to the cytoplasm. Its function is as follows. This protein promotes the GTP-dependent binding of aminoacyl-tRNA to the A-site of ribosomes during protein biosynthesis. This Apis mellifera (Honeybee) protein is Elongation factor 1-alpha.